Consider the following 423-residue polypeptide: Serine--tRNA ligase (423 aa).

231 to 233 (TAE) serves as a coordination point for L-serine. Residue 262-264 (RSE) participates in ATP binding. E285 lines the L-serine pocket. 349–352 (EISS) is an ATP binding site. Position 384 (S384) interacts with L-serine.

The protein belongs to the class-II aminoacyl-tRNA synthetase family. Type-1 seryl-tRNA synthetase subfamily. As to quaternary structure, homodimer. The tRNA molecule binds across the dimer.

It localises to the cytoplasm. It catalyses the reaction tRNA(Ser) + L-serine + ATP = L-seryl-tRNA(Ser) + AMP + diphosphate + H(+). It carries out the reaction tRNA(Sec) + L-serine + ATP = L-seryl-tRNA(Sec) + AMP + diphosphate + H(+). Its pathway is aminoacyl-tRNA biosynthesis; selenocysteinyl-tRNA(Sec) biosynthesis; L-seryl-tRNA(Sec) from L-serine and tRNA(Sec): step 1/1. Catalyzes the attachment of serine to tRNA(Ser). Is also able to aminoacylate tRNA(Sec) with serine, to form the misacylated tRNA L-seryl-tRNA(Sec), which will be further converted into selenocysteinyl-tRNA(Sec). The chain is Serine--tRNA ligase from Lactococcus lactis subsp. cremoris (strain MG1363).